Consider the following 205-residue polypeptide: Holliday junction branch migration complex subunit RuvA (205 aa).

A domain I region spans residues 1 to 63 (MIDFVEGTLS…EDAILLYGFA (63 aa)). The segment at 64 to 142 (TRDERDLFRK…GYTPSAILTV (79 aa)) is domain II. The tract at residues 143–153 (AAGDLTAGEQA) is flexible linker. The domain III stretch occupies residues 153–205 (AVSALNEALDALTALGYSDGELQKIRNTLSEKSKEGDGVEKLIKQGLALLMRG).

This sequence belongs to the RuvA family. In terms of assembly, homotetramer. Forms an RuvA(8)-RuvB(12)-Holliday junction (HJ) complex. HJ DNA is sandwiched between 2 RuvA tetramers; dsDNA enters through RuvA and exits via RuvB. An RuvB hexamer assembles on each DNA strand where it exits the tetramer. Each RuvB hexamer is contacted by two RuvA subunits (via domain III) on 2 adjacent RuvB subunits; this complex drives branch migration. In the full resolvosome a probable DNA-RuvA(4)-RuvB(12)-RuvC(2) complex forms which resolves the HJ.

It localises to the cytoplasm. Its function is as follows. The RuvA-RuvB-RuvC complex processes Holliday junction (HJ) DNA during genetic recombination and DNA repair, while the RuvA-RuvB complex plays an important role in the rescue of blocked DNA replication forks via replication fork reversal (RFR). RuvA specifically binds to HJ cruciform DNA, conferring on it an open structure. The RuvB hexamer acts as an ATP-dependent pump, pulling dsDNA into and through the RuvAB complex. HJ branch migration allows RuvC to scan DNA until it finds its consensus sequence, where it cleaves and resolves the cruciform DNA. This is Holliday junction branch migration complex subunit RuvA from Brevibacillus brevis (strain 47 / JCM 6285 / NBRC 100599).